Here is a 284-residue protein sequence, read N- to C-terminus: MPAAISRNWPAPAKLNLFLHINGRRADGYHALQTLFQFIDCCDMLDFKVTETPELILHSNMSGVVADSDNLILRAAKSLQQTTGFNGGAEIWLDKRLPMGGGLGGGSSDAATTLVALNKLWHTQLSTEELAKIGLKLGADIPVFIHGFAAFAEGVGERLQAVNPSEPWYLVIAPDAHVSTADVFQDPLLPRETPKLAIDTLMSQPWANDCQKLVVSKYPQVAKALGWLLEYAPSRMTGTGACVFGEFTQQQQALAALAKLPSEMQGFVAQGMNLSPLITRLSHP.

Lysine 14 is a catalytic residue. Residue 98-108 (PMGGGLGGGSS) coordinates ATP. Aspartate 140 is a catalytic residue.

It belongs to the GHMP kinase family. IspE subfamily.

It catalyses the reaction 4-CDP-2-C-methyl-D-erythritol + ATP = 4-CDP-2-C-methyl-D-erythritol 2-phosphate + ADP + H(+). The protein operates within isoprenoid biosynthesis; isopentenyl diphosphate biosynthesis via DXP pathway; isopentenyl diphosphate from 1-deoxy-D-xylulose 5-phosphate: step 3/6. Functionally, catalyzes the phosphorylation of the position 2 hydroxy group of 4-diphosphocytidyl-2C-methyl-D-erythritol. The sequence is that of 4-diphosphocytidyl-2-C-methyl-D-erythritol kinase from Shewanella baltica (strain OS155 / ATCC BAA-1091).